A 484-amino-acid polypeptide reads, in one-letter code: Hexokinase-1 (484 aa).

Residues 25 to 465 form the Hexokinase domain; it reads KTLQDHLDEL…SGVGAALVSA (441 aa). A hexokinase small subdomain region spans residues 79-212; the sequence is DGNEHGSYLA…CNNVRLNAIL (134 aa). 90 to 95 is an ATP binding site; it reads DLGGTN. Residues 160–161, 177–178, and 213–214 each bind substrate; these read SY, TK, and SD. The hexokinase large subdomain stretch occupies residues 213-454; that stretch reads SDTTGTLVAS…SKVVTIPAED (242 aa). Thr237 is an ATP binding site. Residues Asn240, Glu269, and Glu302 each contribute to the substrate site. ATP is bound by residues 307-308, 344-348, and 419-423; these read GC, TSVLS, and SVYNL.

This sequence belongs to the hexokinase family. In terms of assembly, monomer.

It catalyses the reaction a D-hexose + ATP = a D-hexose 6-phosphate + ADP + H(+). The enzyme catalyses D-mannose + ATP = D-mannose 6-phosphate + ADP + H(+). It carries out the reaction D-fructose + ATP = D-fructose 6-phosphate + ADP + H(+). The catalysed reaction is D-glucose + ATP = D-glucose 6-phosphate + ADP + H(+). It participates in carbohydrate metabolism; hexose metabolism. It functions in the pathway carbohydrate degradation; glycolysis; D-glyceraldehyde 3-phosphate and glycerone phosphate from D-glucose: step 1/4. Its function is as follows. Catalyzes the phosphorylation of hexose (six-carbon sugars) to hexose 6-phosphate. Phosphorylates D-fructose, D-mannose and, to a lower extent, D-glucose. Compared to hxk2, has low affinity for D-glucose. This chain is Hexokinase-1, found in Schizosaccharomyces pombe (strain 972 / ATCC 24843) (Fission yeast).